A 136-amino-acid chain; its full sequence is Large-conductance mechanosensitive channel (136 aa).

The next 2 membrane-spanning stretches (helical) occupy residues 9-29 (AFASRGNVIDMAVGIIIGAAF) and 79-99 (IQTIIDFTIIAFAIFMGLKAI).

Belongs to the MscL family. As to quaternary structure, homopentamer.

The protein localises to the cell inner membrane. Its function is as follows. Channel that opens in response to stretch forces in the membrane lipid bilayer. May participate in the regulation of osmotic pressure changes within the cell. The protein is Large-conductance mechanosensitive channel of Shewanella sp. (strain ANA-3).